Consider the following 273-residue polypeptide: Exosome complex component Rrp42 (273 aa).

It belongs to the RNase PH family. Rrp42 subfamily. Component of the archaeal exosome complex. Forms a hexameric ring-like arrangement composed of 3 Rrp41-Rrp42 heterodimers. The hexameric ring associates with a trimer of Rrp4 and/or Csl4 subunits.

The protein resides in the cytoplasm. In terms of biological role, non-catalytic component of the exosome, which is a complex involved in RNA degradation. Contributes to the structuring of the Rrp41 active site. The polypeptide is Exosome complex component Rrp42 (Thermococcus gammatolerans (strain DSM 15229 / JCM 11827 / EJ3)).